We begin with the raw amino-acid sequence, 104 residues long: U20-lycotoxin-Ls1a (104 aa).

The N-terminal stretch at 1-30 (MFSTSDQVSKMNSRILSALLILGIATCVIA) is a signal peptide. The region spanning 31 to 76 (GGFCPKSRHPQCNLSYKINDCCAQSDCRVGSVCCVEGCGNVCRAES) is the WAP domain. 5 disulfide bridges follow: Cys-34-Cys-64, Cys-42-Cys-68, Cys-51-Cys-63, Cys-52-Cys-90, and Cys-57-Cys-72.

It belongs to the venom protein 11 family. 02 (wap-2) subfamily. In terms of processing, contains 5 disulfide bonds. Expressed by the venom gland.

It is found in the secreted. Has antibacterial activity. The chain is U20-lycotoxin-Ls1a from Lycosa singoriensis (Wolf spider).